The following is a 134-amino-acid chain: Translation initiation factor 2 subunit beta (134 aa).

Positions 1–12 (MGYEEQLDRALE) are enriched in basic and acidic residues. Residues 1–32 (MGYEEQLDRALEETPDIEGTAARFSVPDPDVR) form a disordered region.

The protein belongs to the eIF-2-beta/eIF-5 family. Heterotrimer composed of an alpha, a beta and a gamma chain.

In terms of biological role, eIF-2 functions in the early steps of protein synthesis by forming a ternary complex with GTP and initiator tRNA. This Natronomonas pharaonis (strain ATCC 35678 / DSM 2160 / CIP 103997 / JCM 8858 / NBRC 14720 / NCIMB 2260 / Gabara) (Halobacterium pharaonis) protein is Translation initiation factor 2 subunit beta.